A 102-amino-acid chain; its full sequence is Integration host factor subunit alpha (102 aa).

The protein belongs to the bacterial histone-like protein family. As to quaternary structure, heterodimer of an alpha and a beta chain.

Its function is as follows. This protein is one of the two subunits of integration host factor, a specific DNA-binding protein that functions in genetic recombination as well as in transcriptional and translational control. In Paracoccus denitrificans (strain Pd 1222), this protein is Integration host factor subunit alpha.